The sequence spans 432 residues: Keratin, type I cytoskeletal 18-B (432 aa).

Low complexity predominate over residues 1–21 (MSYSRSMYSSSSVVGGSPYRS). The disordered stretch occupies residues 1 to 44 (MSYSRSMYSSSSVVGGSPYRSLSSAPRFAPGSSAASVHAGPGGS). Residues 2-82 (SYSRSMYSSS…NVSLMGGAQN (81 aa)) form a head region. The coil 1A stretch occupies residues 83 to 118 (EKETMQDLNDRLASYLERVRSLETANKELEVQIRQH). Residues 83–393 (EKETMQDLND…RLLEGDSFDL (311 aa)) form the IF rod domain. Residues 119 to 134 (TEKKGPAKDWSPYYKA) are linker 1. Residues 135-226 (IEDLKKQVFD…KNHQDDVNEL (92 aa)) are coil 1B. The tract at residues 227-250 (QAQIARSAVTVEVDAPKSQDLGKI) is linker 12. A coil 2 region spans residues 251–388 (MAELRAQYDG…IHTYRRLLEG (138 aa)). The tail stretch occupies residues 389-432 (DSFDLQDAVPTVTTQTVKKVITTTQRIVDGKVVAESNDTEVLKA).

It belongs to the intermediate filament family. Heterotetramer of two type I and two type II keratins. Keratin-18 associates with keratin-8. Post-translationally, phosphorylated. In terms of processing, proteolytically cleaved by caspases during epithelial cell apoptosis.

When phosphorylated, plays a role in filament reorganization. The polypeptide is Keratin, type I cytoskeletal 18-B (krt18-b) (Xenopus laevis (African clawed frog)).